The sequence spans 492 residues: MANYFNTLNLRQQLAQLGKCRFMAREEFVDETGYLKGKKVVIVGCGAQGLNQGLNMRDSGLDIAYALRKEAIEEKRASWRKATENGFQVGTYEELIPQADLVINLTPDKQHSSVVSAVQPLMKEGAALGYSHGLNIVEVGEQIRKDITVVMVAPKCPGTEVREEYKRGFGVPTLIAVHPENDPKGEGMAIAKAWAAATGAHRAGVLESSFVAEVKSDLMGEQTILCGMLQAGSLLCYDKLVADGAEPGYAGKLIQFGWETITEALKQGGITLMMDRLSNPAKLRAYALSEQLKEMMTPLFQKHMDDIISGEFSSGMMADWANDDKKLLGWREETGNTSFENSPEYDGKISEQEYFDHGVLMVAMVKAGVELAFEIMVDTGIIAESAYYESLHELPLIANTISRKRLYEMNVVISDTAEYGNYLFSHVAVPLLKEKFMGSLQAGDLGKPVVDNGIDNAQLRDVNEAIRHHPIEVVGRVLRGYMTDMKRIAVGG.

In terms of domain architecture, KARI N-terminal Rossmann spans 15 to 208 (AQLGKCRFMA…GAHRAGVLES (194 aa)). Residues 45–48 (CGAQ), Arg-68, Arg-76, Ser-78, and 108–110 (DKQ) contribute to the NADP(+) site. Residue His-132 is part of the active site. NADP(+) is bound at residue Gly-158. KARI C-terminal knotted domains are found at residues 209 to 344 (SFVA…NSPE) and 345 to 485 (YDGK…MTDM). 4 residues coordinate Mg(2+): Asp-217, Glu-221, Glu-389, and Glu-393. Substrate is bound at residue Ser-414.

This sequence belongs to the ketol-acid reductoisomerase family. It depends on Mg(2+) as a cofactor.

The catalysed reaction is (2R)-2,3-dihydroxy-3-methylbutanoate + NADP(+) = (2S)-2-acetolactate + NADPH + H(+). The enzyme catalyses (2R,3R)-2,3-dihydroxy-3-methylpentanoate + NADP(+) = (S)-2-ethyl-2-hydroxy-3-oxobutanoate + NADPH + H(+). It functions in the pathway amino-acid biosynthesis; L-isoleucine biosynthesis; L-isoleucine from 2-oxobutanoate: step 2/4. Its pathway is amino-acid biosynthesis; L-valine biosynthesis; L-valine from pyruvate: step 2/4. Functionally, involved in the biosynthesis of branched-chain amino acids (BCAA). Catalyzes an alkyl-migration followed by a ketol-acid reduction of (S)-2-acetolactate (S2AL) to yield (R)-2,3-dihydroxy-isovalerate. In the isomerase reaction, S2AL is rearranged via a Mg-dependent methyl migration to produce 3-hydroxy-3-methyl-2-ketobutyrate (HMKB). In the reductase reaction, this 2-ketoacid undergoes a metal-dependent reduction by NADPH to yield (R)-2,3-dihydroxy-isovalerate. This is Ketol-acid reductoisomerase (NADP(+)) from Photorhabdus laumondii subsp. laumondii (strain DSM 15139 / CIP 105565 / TT01) (Photorhabdus luminescens subsp. laumondii).